Reading from the N-terminus, the 211-residue chain is uncharacterized protein (211 aa).

A run of 3 helical transmembrane segments spans residues 22-42 (FINF…GLKV), 111-131 (IIGA…WFPV), and 133-153 (GMAG…FMIT).

It to E.coli YkgB. To H.influenzae HI_0219.

It localises to the cell membrane. This is an uncharacterized protein from Mannheimia haemolytica (Pasteurella haemolytica).